Reading from the N-terminus, the 1112-residue chain is DNA polymerase II large subunit (1112 aa).

Belongs to the archaeal DNA polymerase II family. As to quaternary structure, heterodimer of a large subunit and a small subunit.

The catalysed reaction is DNA(n) + a 2'-deoxyribonucleoside 5'-triphosphate = DNA(n+1) + diphosphate. It catalyses the reaction Exonucleolytic cleavage in the 3'- to 5'-direction to yield nucleoside 5'-phosphates.. In terms of biological role, possesses two activities: a DNA synthesis (polymerase) and an exonucleolytic activity that degrades single-stranded DNA in the 3'- to 5'-direction. Has a template-primer preference which is characteristic of a replicative DNA polymerase. In Cenarchaeum symbiosum (strain A), this protein is DNA polymerase II large subunit.